A 320-amino-acid polypeptide reads, in one-letter code: Aspartate carbamoyltransferase catalytic subunit (320 aa).

Residues Arg-68 and Thr-69 each coordinate carbamoyl phosphate. An L-aspartate-binding site is contributed by Lys-96. Carbamoyl phosphate-binding residues include Arg-118, His-148, and Gln-151. L-aspartate is bound by residues Arg-181 and Arg-236. Carbamoyl phosphate contacts are provided by Gly-277 and Pro-278.

Belongs to the aspartate/ornithine carbamoyltransferase superfamily. ATCase family. As to quaternary structure, heterododecamer (2C3:3R2) of six catalytic PyrB chains organized as two trimers (C3), and six regulatory PyrI chains organized as three dimers (R2).

The enzyme catalyses carbamoyl phosphate + L-aspartate = N-carbamoyl-L-aspartate + phosphate + H(+). It functions in the pathway pyrimidine metabolism; UMP biosynthesis via de novo pathway; (S)-dihydroorotate from bicarbonate: step 2/3. Its function is as follows. Catalyzes the condensation of carbamoyl phosphate and aspartate to form carbamoyl aspartate and inorganic phosphate, the committed step in the de novo pyrimidine nucleotide biosynthesis pathway. This is Aspartate carbamoyltransferase catalytic subunit from Leptothrix cholodnii (strain ATCC 51168 / LMG 8142 / SP-6) (Leptothrix discophora (strain SP-6)).